The sequence spans 139 residues: Exodeoxyribonuclease 7 small subunit (139 aa).

2 disordered regions span residues 1-26 and 82-139; these read MAKK…LGDF and DAEG…EDDE. Residues 130-139 show a composition bias toward acidic residues; that stretch reads ADLDSAEDDE.

The protein belongs to the XseB family. In terms of assembly, heterooligomer composed of large and small subunits.

The protein resides in the cytoplasm. It carries out the reaction Exonucleolytic cleavage in either 5'- to 3'- or 3'- to 5'-direction to yield nucleoside 5'-phosphates.. Bidirectionally degrades single-stranded DNA into large acid-insoluble oligonucleotides, which are then degraded further into small acid-soluble oligonucleotides. The chain is Exodeoxyribonuclease 7 small subunit from Rhodopirellula baltica (strain DSM 10527 / NCIMB 13988 / SH1).